Consider the following 210-residue polypeptide: Orotate phosphoribosyltransferase (210 aa).

5-phospho-alpha-D-ribose 1-diphosphate is bound by residues R97, K101, H103, and 123–131; that span reads EDLISTGGS. S127 provides a ligand contact to orotate.

This sequence belongs to the purine/pyrimidine phosphoribosyltransferase family. PyrE subfamily. Homodimer. Mg(2+) is required as a cofactor.

The enzyme catalyses orotidine 5'-phosphate + diphosphate = orotate + 5-phospho-alpha-D-ribose 1-diphosphate. It functions in the pathway pyrimidine metabolism; UMP biosynthesis via de novo pathway; UMP from orotate: step 1/2. Catalyzes the transfer of a ribosyl phosphate group from 5-phosphoribose 1-diphosphate to orotate, leading to the formation of orotidine monophosphate (OMP). In Porphyromonas gingivalis (strain ATCC BAA-308 / W83), this protein is Orotate phosphoribosyltransferase.